The sequence spans 273 residues: Dermonecrotic toxin LdSicTox-alphaIB1bi (273 aa).

His-5 is a catalytic residue. Mg(2+) is bound by residues Glu-25 and Asp-27. His-41 functions as the Nucleophile in the catalytic mechanism. 2 disulfides stabilise this stretch: Cys-45-Cys-51 and Cys-47-Cys-190. Asp-85 is a Mg(2+) binding site. N-linked (GlcNAc...) asparagine glycosylation occurs at Asn-250.

It belongs to the arthropod phospholipase D family. Class II subfamily. Mg(2+) serves as cofactor. Expressed by the venom gland.

It is found in the secreted. The catalysed reaction is an N-(acyl)-sphingosylphosphocholine = an N-(acyl)-sphingosyl-1,3-cyclic phosphate + choline. The enzyme catalyses an N-(acyl)-sphingosylphosphoethanolamine = an N-(acyl)-sphingosyl-1,3-cyclic phosphate + ethanolamine. It carries out the reaction a 1-acyl-sn-glycero-3-phosphocholine = a 1-acyl-sn-glycero-2,3-cyclic phosphate + choline. It catalyses the reaction a 1-acyl-sn-glycero-3-phosphoethanolamine = a 1-acyl-sn-glycero-2,3-cyclic phosphate + ethanolamine. Functionally, dermonecrotic toxins cleave the phosphodiester linkage between the phosphate and headgroup of certain phospholipids (sphingolipid and lysolipid substrates), forming an alcohol (often choline) and a cyclic phosphate. This toxin acts on sphingomyelin (SM). It may also act on ceramide phosphoethanolamine (CPE), lysophosphatidylcholine (LPC) and lysophosphatidylethanolamine (LPE), but not on lysophosphatidylserine (LPS), and lysophosphatidylglycerol (LPG). It acts by transphosphatidylation, releasing exclusively cyclic phosphate products as second products. Induces dermonecrosis, hemolysis, increased vascular permeability, edema, inflammatory response, and platelet aggregation. The polypeptide is Dermonecrotic toxin LdSicTox-alphaIB1bi (Loxosceles deserta (Desert recluse spider)).